Here is a 369-residue protein sequence, read N- to C-terminus: 4-hydroxy-3-methylbut-2-en-1-yl diphosphate synthase (flavodoxin) (369 aa).

The [4Fe-4S] cluster site is built by Cys270, Cys273, Cys305, and Glu312.

Belongs to the IspG family. The cofactor is [4Fe-4S] cluster.

The enzyme catalyses (2E)-4-hydroxy-3-methylbut-2-enyl diphosphate + oxidized [flavodoxin] + H2O + 2 H(+) = 2-C-methyl-D-erythritol 2,4-cyclic diphosphate + reduced [flavodoxin]. Its pathway is isoprenoid biosynthesis; isopentenyl diphosphate biosynthesis via DXP pathway; isopentenyl diphosphate from 1-deoxy-D-xylulose 5-phosphate: step 5/6. Functionally, converts 2C-methyl-D-erythritol 2,4-cyclodiphosphate (ME-2,4cPP) into 1-hydroxy-2-methyl-2-(E)-butenyl 4-diphosphate. The polypeptide is 4-hydroxy-3-methylbut-2-en-1-yl diphosphate synthase (flavodoxin) (Pseudomonas savastanoi pv. phaseolicola (strain 1448A / Race 6) (Pseudomonas syringae pv. phaseolicola (strain 1448A / Race 6))).